Reading from the N-terminus, the 77-residue chain is Pi/alpha-stichotoxin-Hmg5b (77 aa).

An N-terminal signal peptide occupies residues 1–21; the sequence is MDYQRLLFLFAVAMVITTTVA. Residues 22–34 constitute a propeptide that is removed on maturation; the sequence is LPKDTALMDGQLQ. 3 disulfides stabilise this stretch: Cys40–Cys73, Cys42–Cys66, and Cys56–Cys74. Residue Met52 is modified to Methionine sulfoxide; partial.

The protein belongs to the sea anemone type 3 (BDS) potassium channel toxin family. Post-translationally, toxin occurs in two forms in the mucus, Hmg 1b-2 which is not oxidized and Hmg 1b-2 MetOx which is oxidized at Met-52.

Its subcellular location is the secreted. The protein resides in the nematocyst. Its function is as follows. The non-oxidized toxin is remarkably non-selective with activity on many different ion channels. Weakly and reversibly inhibits rat and human homomeric ASIC1 (isoform ASIC1a) (IC(50)=4.8 uM, and IC(50)=14.6 uM), and ASIC3 (IC(50)=15.9 uM). Molecular modeling interaction with ASIC1a suggests that this peptide hinders the collapse of acidic pockets and stabilizes nonconducting channels state. It activates several potassium channels including Kv1.1/KCNA1, Kv1.2/KCNA2, and drosophila Shaker IR. It moderately to potently inhibits potassium channels including Kv1.3/KCNA3, Kv1.4/KCNA4, Kv1.5/KCNA5, Kv1.6/KCNA6, Kv2.1/KCNB1, Kv4.2/KCND2, Kv7.1/KCNQ1, Kv7.2/Kv7.3 (KCNQ2/KCNQ3), Kv7.4/KCNQ4, hERG/KCNH2, and C.elegans QKT1. On sodium channels, it moderately to potently inhibits Nav1.1/SCN1A, Nav1.2/SCN2A, Nav1.3/SCN3A, Nav1.4/SCN4A, Nav1.5/SCN5A, Nav1.6/SCN8A, Nav1.7/SCN9A, Nav1.8/SCN10A, and B.germanica BgNav. It also moderately to potently inhibits Cav3.1/CACNA1G, Cav3.2/CACNA1H, and Cav3.3/CACNA1I. Significant shifts in the voltage-current relationship are observed on Kv and Nav, depending on the channel isoform, whereas the toxin does not seem to modulate the voltage-sensor domains of Cav channels, acting mainly as a pore blocker. Does not activate nicotinic acetylcholine receptors (nAChR), but potentiates ACh-elicited current of human alpha-7/CHRNA7 nAChR. Is also able to bind T.californica muscle-type nAChRs. In vivo, causes an excitatory effect in mice behavior. Also shows antihyperalgesic and analgesic activity in the acid-induced muscle pain mice model, and weak anti-inflammatory effect in models of acute local inflammation. Functionally, forms an oxidized toxin derivative (Hmg 1b-2 MetOx). Able to bind T.californica muscle-type nAChRs (alpha-1-beta-1-delta-epsilon (CHRNA1-CHRNB1-CHRND-CHRNE)). In Heteractis magnifica (Magnificent sea anemone), this protein is Pi/alpha-stichotoxin-Hmg5b.